A 1262-amino-acid chain; its full sequence is DNA-directed RNA polymerase subunit beta' (1262 aa).

4 residues coordinate Zn(2+): Cys-220, Cys-294, Cys-301, and Cys-304.

This sequence belongs to the RNA polymerase beta' chain family. RpoC2 subfamily. In cyanobacteria the RNAP catalytic core is composed of 2 alpha, 1 beta, 1 beta', 1 gamma and 1 omega subunit. When a sigma factor is associated with the core the holoenzyme is formed, which can initiate transcription. Requires Zn(2+) as cofactor.

The enzyme catalyses RNA(n) + a ribonucleoside 5'-triphosphate = RNA(n+1) + diphosphate. Functionally, DNA-dependent RNA polymerase catalyzes the transcription of DNA into RNA using the four ribonucleoside triphosphates as substrates. The polypeptide is DNA-directed RNA polymerase subunit beta' (Gloeobacter violaceus (strain ATCC 29082 / PCC 7421)).